The chain runs to 39 residues: uncharacterized protein (39 aa).

This is an uncharacterized protein from Bacillus subtilis (strain 168).